The sequence spans 541 residues: Chaperonin GroEL (541 aa).

ATP is bound by residues 29-32 (TLGP), 86-90 (DGTTT), G413, 476-478 (NAA), and D492.

The protein belongs to the chaperonin (HSP60) family. Forms a cylinder of 14 subunits composed of two heptameric rings stacked back-to-back. Interacts with the co-chaperonin GroES.

Its subcellular location is the cytoplasm. It carries out the reaction ATP + H2O + a folded polypeptide = ADP + phosphate + an unfolded polypeptide.. Functionally, together with its co-chaperonin GroES, plays an essential role in assisting protein folding. The GroEL-GroES system forms a nano-cage that allows encapsulation of the non-native substrate proteins and provides a physical environment optimized to promote and accelerate protein folding. The sequence is that of Chaperonin GroEL from Enterococcus faecalis (strain ATCC 700802 / V583).